The chain runs to 187 residues: Putative zinc finger protein 833 (187 aa).

6 consecutive C2H2-type zinc fingers follow at residues 10–32 (YKCKFCGKAFDNLHLYLTHERTH), 38–60 (YECNKCGKAFSCSSSIRKHARIH), 66–88 (YICKQCGKAFRYSSSIRNHENTH), 94–116 (CECKQCGKAFSYSSYFRIHERIH), 122–144 (YKCKECGKTFTYPSAFHKHKSTH), and 150–172 (YECKECGKAFDCFSSFHSHEGVH).

The polypeptide is Putative zinc finger protein 833 (ZNF833P) (Homo sapiens (Human)).